The primary structure comprises 473 residues: Glutamate--tRNA ligase (473 aa).

The short motif at 9–19 is the 'HIGH' region element; that stretch reads PSPTGELHLGS. A 'KMSKS' region motif is present at residues 237–241; that stretch reads KLSKK. K240 contributes to the ATP binding site.

It belongs to the class-I aminoacyl-tRNA synthetase family. Glutamate--tRNA ligase type 1 subfamily. Monomer.

It is found in the cytoplasm. It catalyses the reaction tRNA(Glu) + L-glutamate + ATP = L-glutamyl-tRNA(Glu) + AMP + diphosphate. Catalyzes the attachment of glutamate to tRNA(Glu) in a two-step reaction: glutamate is first activated by ATP to form Glu-AMP and then transferred to the acceptor end of tRNA(Glu). The protein is Glutamate--tRNA ligase of Wigglesworthia glossinidia brevipalpis.